Reading from the N-terminus, the 248-residue chain is DNA repair protein RecO (248 aa).

Belongs to the RecO family.

Its function is as follows. Involved in DNA repair and RecF pathway recombination. This chain is DNA repair protein RecO, found in Thermoanaerobacter sp. (strain X514).